The sequence spans 552 residues: Probable protein kinase UbiB (552 aa).

The helical transmembrane segment at 22 to 42 threads the bilayer; that stretch reads LLPANLPLAATLLLLPFKLFP. The 381-residue stretch at 118 to 498 folds into the Protein kinase domain; it reads SFNIEPLASA…QQLARQRNRR (381 aa). ATP contacts are provided by residues 124 to 132 and Lys146; that span reads LASASVAQV. The Proton acceptor role is filled by Asp281. 2 helical membrane-spanning segments follow: residues 501–521 and 530–550; these read ITLL…GEGI and FGDI…AWLL.

The protein belongs to the ABC1 family. UbiB subfamily.

The protein resides in the cell inner membrane. It participates in cofactor biosynthesis; ubiquinone biosynthesis [regulation]. Is probably a protein kinase regulator of UbiI activity which is involved in aerobic coenzyme Q (ubiquinone) biosynthesis. This is Probable protein kinase UbiB from Cellvibrio japonicus (strain Ueda107) (Pseudomonas fluorescens subsp. cellulosa).